A 294-amino-acid chain; its full sequence is Putative sugar lactone lactonase (294 aa).

Residues Glu21, Asn150, and Asp201 each coordinate a divalent metal cation. Asp201 serves as the catalytic Proton donor/acceptor.

It belongs to the SMP-30/CGR1 family. A divalent metal cation serves as cofactor.

Involved in the degradation of galactose via the DeLey-Doudoroff pathway. The protein is Putative sugar lactone lactonase of Rhizobium meliloti (strain 1021) (Ensifer meliloti).